A 244-amino-acid polypeptide reads, in one-letter code: LOB domain-containing protein 17 (244 aa).

Residues 6–108 enclose the LOB domain; the sequence is SPCGACKFLR…TQLEILKQQA (103 aa).

Belongs to the LOB domain-containing protein family. As to expression, expressed in roots, stems, leaves and flowers.

The polypeptide is LOB domain-containing protein 17 (LBD17) (Arabidopsis thaliana (Mouse-ear cress)).